The primary structure comprises 111 residues: Macrodomain Ori protein (111 aa).

The protein belongs to the MaoP family.

Involved in the organization of the Ori region of the chromosome into a macrodomain (MD). It constrains DNA mobility in the Ori macrodomain and limits long-distance DNA interactions with other chromosomal regions. In Haemophilus influenzae (strain ATCC 51907 / DSM 11121 / KW20 / Rd), this protein is Macrodomain Ori protein.